Here is an 87-residue protein sequence, read N- to C-terminus: Retinal rod rhodopsin-sensitive cGMP 3',5'-cyclic phosphodiesterase subunit gamma (87 aa).

Met-1 bears the N-acetylmethionine mark. Residues 1-12 (MNLEPPKAEIRS) are compositionally biased toward basic and acidic residues. The interval 1-55 (MNLEPPKAEIRSATRVIGGPVTPRKGPPKFKQRQTRQFKSKPPKKGVQGFGDDIP) is disordered. Residues 26 to 44 (GPPKFKQRQTRQFKSKPPK) show a composition bias toward basic residues.

Belongs to the rod/cone cGMP-PDE gamma subunit family. Oligomer composed of two catalytic chains (alpha and beta), an inhibitory chain (gamma) and the delta chain.

The enzyme catalyses 3',5'-cyclic GMP + H2O = GMP + H(+). In terms of biological role, participates in processes of transmission and amplification of the visual signal. cGMP-PDEs are the effector molecules in G-protein-mediated phototransduction in vertebrate rods and cones. The protein is Retinal rod rhodopsin-sensitive cGMP 3',5'-cyclic phosphodiesterase subunit gamma (PDE6G) of Canis lupus familiaris (Dog).